Reading from the N-terminus, the 436-residue chain is Cytochrome b5-related protein (436 aa).

The 85-residue stretch at 16 to 100 (PTYRNSALIT…IAKYKVRDAA (85 aa)) folds into the Cytochrome b5 heme-binding domain. 2 residues coordinate heme: His59 and His82.

Muscle.

Its function is as follows. May play a role in muscle cell metabolism. The polypeptide is Cytochrome b5-related protein (Cyt-b5-r) (Drosophila melanogaster (Fruit fly)).